The following is a 513-amino-acid chain: MAFQVNTNINALNAHAMGLVTQRELKESLERLSSGLRINKAADDASGMTIADSLRSQAKSLGQAIANTNDGMGIIQIADKAMDEQIKILDTIKVKATQAAQDGQNTQSRKALQADIVRLIQSLDNIGNTTSYNGQTLLSGAFSNKEFQVGAYSNETIKASIGSATSDKIGQVKITTGKNITASGEVALTFKQVDGVHDVSLESVKISTSAGTGLGVLAEVINKNSNATGVRATANVITTSDSAIKSGSLSSLTVNGIEIGNILGIKKNDSDGRLVAALNAVTAQTGVEAYTDSVGRLNLRSIDGRGINIKANSTNVDGQASALTTLNGGQDITRGSTNFGRLSLVRQDARDILVVSGANVSASAGYAAIGFAKGTTANTTVNLRDVLGEFNQAVRSASGANYNKTLASENLTLGSGVTTLRGAMVVMDIAESAQKMLDKVRSDLGSVQNQMVSTVNNITITQVNVKAAESQIRDVDFAQESANFSKNNILAQSGSYAMSQANTVQQNILRLLT.

It belongs to the bacterial flagellin family. In terms of assembly, heteromer of FlaA and FlaB. FlaB is located proximal to the hook while the remainder of the filament is composed of the predominant FlaA.

It localises to the secreted. The protein resides in the bacterial flagellum. Its function is as follows. Flagellin is the subunit protein which polymerizes to form the filaments of bacterial flagella. Important for motility and virulence. This chain is Flagellin A (flaA), found in Helicobacter felis (strain ATCC 49179 / CCUG 28539 / NCTC 12436 / CS1).